A 125-amino-acid polypeptide reads, in one-letter code: Protein ApaG (125 aa).

Residues 1-125 (MIEQPRICVQ…FRLAIPALIH (125 aa)) enclose the ApaG domain.

The chain is Protein ApaG from Yersinia pseudotuberculosis serotype IB (strain PB1/+).